The primary structure comprises 193 residues: Imidazoleglycerol-phosphate dehydratase (193 aa).

Belongs to the imidazoleglycerol-phosphate dehydratase family.

It is found in the cytoplasm. The catalysed reaction is D-erythro-1-(imidazol-4-yl)glycerol 3-phosphate = 3-(imidazol-4-yl)-2-oxopropyl phosphate + H2O. The protein operates within amino-acid biosynthesis; L-histidine biosynthesis; L-histidine from 5-phospho-alpha-D-ribose 1-diphosphate: step 6/9. This chain is Imidazoleglycerol-phosphate dehydratase, found in Metallosphaera sedula (strain ATCC 51363 / DSM 5348 / JCM 9185 / NBRC 15509 / TH2).